A 302-amino-acid polypeptide reads, in one-letter code: Cobalt-precorrin-6A reductase (302 aa).

Basic and acidic residues predominate over residues 1–10; the sequence is MQTPEIKEGT. The interval 1–37 is disordered; sequence MQTPEIKEGTEQYLWRRKTMNPGDKGVKRKGSDRQRE.

The protein belongs to the precorrin-6x reductase family.

It catalyses the reaction Co-precorrin-6B + NAD(+) = Co-precorrin-6A + NADH + H(+). It functions in the pathway cofactor biosynthesis; adenosylcobalamin biosynthesis; cob(II)yrinate a,c-diamide from sirohydrochlorin (anaerobic route): step 7/10. Catalyzes the reduction of the macrocycle of cobalt-precorrin-6A to cobalt-precorrin-6B. In Methanothermobacter thermautotrophicus (strain ATCC 29096 / DSM 1053 / JCM 10044 / NBRC 100330 / Delta H) (Methanobacterium thermoautotrophicum), this protein is Cobalt-precorrin-6A reductase (cbiJ).